Reading from the N-terminus, the 79-residue chain is MRFIIRTVMLIALVWIGLLLSGYGVLIGSKENAAGLGLQCTYLTARGTSTVQYLHTKSGFLEITDCPLLRKSNIVVDNG.

Residues 1–33 (MRFIIRTVMLIALVWIGLLLSGYGVLIGSKENA) form the signal peptide.

This is an uncharacterized protein from Shigella flexneri.